Reading from the N-terminus, the 115-residue chain is NAD(P)H-quinone oxidoreductase subunit M (115 aa).

The protein belongs to the complex I NdhM subunit family. NDH-1 can be composed of about 15 different subunits; different subcomplexes with different compositions have been identified which probably have different functions.

Its subcellular location is the cellular thylakoid membrane. The catalysed reaction is a plastoquinone + NADH + (n+1) H(+)(in) = a plastoquinol + NAD(+) + n H(+)(out). The enzyme catalyses a plastoquinone + NADPH + (n+1) H(+)(in) = a plastoquinol + NADP(+) + n H(+)(out). Functionally, NDH-1 shuttles electrons from an unknown electron donor, via FMN and iron-sulfur (Fe-S) centers, to quinones in the respiratory and/or the photosynthetic chain. The immediate electron acceptor for the enzyme in this species is believed to be plastoquinone. Couples the redox reaction to proton translocation, and thus conserves the redox energy in a proton gradient. Cyanobacterial NDH-1 also plays a role in inorganic carbon-concentration. In Prochlorococcus marinus (strain NATL2A), this protein is NAD(P)H-quinone oxidoreductase subunit M.